Here is a 512-residue protein sequence, read N- to C-terminus: Methionine--tRNA ligase (512 aa).

Positions 11–21 match the 'HIGH' region motif; sequence YYASGKPHIGH. Cysteine 126, cysteine 129, cysteine 143, and histidine 147 together coordinate Zn(2+). The 'KMSKS' region motif lies at 301-305; it reads KMSKS. An ATP-binding site is contributed by lysine 304.

It belongs to the class-I aminoacyl-tRNA synthetase family. MetG type 2A subfamily. As to quaternary structure, monomer. Requires Zn(2+) as cofactor.

The protein localises to the cytoplasm. The enzyme catalyses tRNA(Met) + L-methionine + ATP = L-methionyl-tRNA(Met) + AMP + diphosphate. Its function is as follows. Is required not only for elongation of protein synthesis but also for the initiation of all mRNA translation through initiator tRNA(fMet) aminoacylation. This is Methionine--tRNA ligase (metG) from Mycoplasma genitalium (strain ATCC 33530 / DSM 19775 / NCTC 10195 / G37) (Mycoplasmoides genitalium).